The primary structure comprises 533 residues: Tyrosinase (533 aa).

The N-terminal stretch at 1–18 (MFLAVLYCLLWSFQISDG) is a signal peptide. Residues 19–476 (HFPRACASSK…YLEQASRIWP (458 aa)) are Lumenal, melanosome-facing. Asparagine 86, asparagine 111, and asparagine 161 each carry an N-linked (GlcNAc...) asparagine glycan. Positions 180, 202, and 211 each coordinate Cu cation. Residues asparagine 230 and asparagine 337 are each glycosylated (N-linked (GlcNAc...) asparagine). Residues histidine 363 and histidine 367 each contribute to the Cu cation site. N-linked (GlcNAc...) asparagine glycosylation occurs at asparagine 371. Histidine 390 contributes to the Cu cation binding site. Residues 477 to 497 (WLLGAALVGAVIAAALSGLSS) traverse the membrane as a helical segment. Residues 498–533 (RLCLQKKKKKKQPQEERQPLLMDKDDYHSLLYQSHL) lie on the Cytoplasmic side of the membrane.

Belongs to the tyrosinase family. In terms of assembly, forms an OPN3-dependent complex with DCT in response to blue light in melanocytes. Cu(2+) serves as cofactor. Glycosylated. Expressed in the skin.

It is found in the melanosome membrane. It localises to the melanosome. It carries out the reaction 2 L-dopa + O2 = 2 L-dopaquinone + 2 H2O. It catalyses the reaction L-tyrosine + O2 = L-dopaquinone + H2O. The catalysed reaction is 2 5,6-dihydroxyindole-2-carboxylate + O2 = 2 indole-5,6-quinone-2-carboxylate + 2 H2O. This is a copper-containing oxidase that functions in the formation of pigments such as melanins and other polyphenolic compounds. Catalyzes the initial and rate limiting step in the cascade of reactions leading to melanin production from tyrosine. In addition to hydroxylating tyrosine to DOPA (3,4-dihydroxyphenylalanine), also catalyzes the oxidation of DOPA to DOPA-quinone, and possibly the oxidation of DHI (5,6-dihydroxyindole) to indole-5,6 quinone. The polypeptide is Tyrosinase (Tyr) (Mus musculus (Mouse)).